We begin with the raw amino-acid sequence, 196 residues long: ATP-dependent Clp protease proteolytic subunit (196 aa).

Catalysis depends on serine 101, which acts as the Nucleophile. Residue histidine 126 is part of the active site.

This sequence belongs to the peptidase S14 family. Component of the chloroplastic Clp protease core complex.

The protein localises to the plastid. The protein resides in the chloroplast stroma. It carries out the reaction Hydrolysis of proteins to small peptides in the presence of ATP and magnesium. alpha-casein is the usual test substrate. In the absence of ATP, only oligopeptides shorter than five residues are hydrolyzed (such as succinyl-Leu-Tyr-|-NHMec, and Leu-Tyr-Leu-|-Tyr-Trp, in which cleavage of the -Tyr-|-Leu- and -Tyr-|-Trp bonds also occurs).. Functionally, cleaves peptides in various proteins in a process that requires ATP hydrolysis. Has a chymotrypsin-like activity. Plays a major role in the degradation of misfolded proteins. The polypeptide is ATP-dependent Clp protease proteolytic subunit (Lotus japonicus (Lotus corniculatus var. japonicus)).